The chain runs to 180 residues: UPF0227 protein KPN78578_10770 (180 aa).

This sequence belongs to the UPF0227 family.

This is UPF0227 protein KPN78578_10770 from Klebsiella pneumoniae subsp. pneumoniae (strain ATCC 700721 / MGH 78578).